We begin with the raw amino-acid sequence, 213 residues long: Ribosomal RNA small subunit methyltransferase G (213 aa).

S-adenosyl-L-methionine is bound by residues G55, 105 to 106 (AE), and R124.

Belongs to the methyltransferase superfamily. RNA methyltransferase RsmG family.

It is found in the cytoplasm. In terms of biological role, specifically methylates the N7 position of a guanine in 16S rRNA. This is Ribosomal RNA small subunit methyltransferase G from Fervidobacterium nodosum (strain ATCC 35602 / DSM 5306 / Rt17-B1).